Consider the following 336-residue polypeptide: Holliday junction branch migration complex subunit RuvB (336 aa).

Residues 4 to 184 are large ATPase domain (RuvB-L); the sequence is ADRLISASGG…FGIVQRLEFY (181 aa). ATP contacts are provided by residues Ile23, Arg24, Gly65, Lys68, Thr69, Thr70, 131-133, Arg174, Tyr184, and Arg221; that span reads EDY. Thr69 provides a ligand contact to Mg(2+). Residues 185–255 are small ATPAse domain (RuvB-S); that stretch reads NVKDLTDIVA…IAARAMDMLD (71 aa). The tract at residues 258–336 is head domain (RuvB-H); that stretch reads NEGFDFMDRK…HFGLQRPDEG (79 aa). Positions 313 and 318 each coordinate DNA.

The protein belongs to the RuvB family. Homohexamer. Forms an RuvA(8)-RuvB(12)-Holliday junction (HJ) complex. HJ DNA is sandwiched between 2 RuvA tetramers; dsDNA enters through RuvA and exits via RuvB. An RuvB hexamer assembles on each DNA strand where it exits the tetramer. Each RuvB hexamer is contacted by two RuvA subunits (via domain III) on 2 adjacent RuvB subunits; this complex drives branch migration. In the full resolvosome a probable DNA-RuvA(4)-RuvB(12)-RuvC(2) complex forms which resolves the HJ.

Its subcellular location is the cytoplasm. It catalyses the reaction ATP + H2O = ADP + phosphate + H(+). Its function is as follows. The RuvA-RuvB-RuvC complex processes Holliday junction (HJ) DNA during genetic recombination and DNA repair, while the RuvA-RuvB complex plays an important role in the rescue of blocked DNA replication forks via replication fork reversal (RFR). RuvA specifically binds to HJ cruciform DNA, conferring on it an open structure. The RuvB hexamer acts as an ATP-dependent pump, pulling dsDNA into and through the RuvAB complex. RuvB forms 2 homohexamers on either side of HJ DNA bound by 1 or 2 RuvA tetramers; 4 subunits per hexamer contact DNA at a time. Coordinated motions by a converter formed by DNA-disengaged RuvB subunits stimulates ATP hydrolysis and nucleotide exchange. Immobilization of the converter enables RuvB to convert the ATP-contained energy into a lever motion, pulling 2 nucleotides of DNA out of the RuvA tetramer per ATP hydrolyzed, thus driving DNA branch migration. The RuvB motors rotate together with the DNA substrate, which together with the progressing nucleotide cycle form the mechanistic basis for DNA recombination by continuous HJ branch migration. Branch migration allows RuvC to scan DNA until it finds its consensus sequence, where it cleaves and resolves cruciform DNA. The sequence is that of Holliday junction branch migration complex subunit RuvB from Aeromonas hydrophila subsp. hydrophila (strain ATCC 7966 / DSM 30187 / BCRC 13018 / CCUG 14551 / JCM 1027 / KCTC 2358 / NCIMB 9240 / NCTC 8049).